We begin with the raw amino-acid sequence, 338 residues long: RNA 3'-terminal phosphate cyclase (338 aa).

ATP-binding positions include Gln103 and 283-287 (YLADQ). His308 functions as the Tele-AMP-histidine intermediate in the catalytic mechanism.

Belongs to the RNA 3'-terminal cyclase family. Type 1 subfamily.

Its subcellular location is the cytoplasm. The catalysed reaction is a 3'-end 3'-phospho-ribonucleotide-RNA + ATP = a 3'-end 2',3'-cyclophospho-ribonucleotide-RNA + AMP + diphosphate. Functionally, catalyzes the conversion of 3'-phosphate to a 2',3'-cyclic phosphodiester at the end of RNA. The mechanism of action of the enzyme occurs in 3 steps: (A) adenylation of the enzyme by ATP; (B) transfer of adenylate to an RNA-N3'P to produce RNA-N3'PP5'A; (C) and attack of the adjacent 2'-hydroxyl on the 3'-phosphorus in the diester linkage to produce the cyclic end product. The biological role of this enzyme is unknown but it is likely to function in some aspects of cellular RNA processing. The protein is RNA 3'-terminal phosphate cyclase of Escherichia coli O6:K15:H31 (strain 536 / UPEC).